Consider the following 484-residue polypeptide: Acid alpha-amylase (484 aa).

A glycan (N-linked (GlcNAc...) asparagine) is linked at Asn-24. Cysteines 30 and 38 form a disulfide. Trp-83 is a substrate binding site. Asp-121 contributes to the Ca(2+) binding site. Residue His-122 participates in substrate binding. A disulfide bridge connects residues Cys-150 and Cys-164. Residue Asn-157 is glycosylated (N-linked (GlcNAc...) asparagine). Positions 162 and 175 each coordinate Ca(2+). Asn-197 is a glycosylation site (N-linked (GlcNAc...) asparagine). A substrate-binding site is contributed by Arg-204. Ca(2+) is bound by residues Asp-206, Glu-210, and Glu-230. Catalysis depends on Asp-206, which acts as the Nucleophile. Residue Leu-209–Glu-210 participates in substrate binding. The active-site Proton donor is Glu-230. A substrate-binding site is contributed by Gly-234. The cysteines at positions 240 and 283 are disulfide-linked. The substrate site is built by Asp-297 and Arg-344. The cysteines at positions 440 and 475 are disulfide-linked.

It belongs to the glycosyl hydrolase 13 family. In terms of assembly, monomer. The cofactor is Ca(2+).

Its subcellular location is the secreted. It catalyses the reaction Endohydrolysis of (1-&gt;4)-alpha-D-glucosidic linkages in polysaccharides containing three or more (1-&gt;4)-alpha-linked D-glucose units.. The polypeptide is Acid alpha-amylase (Aspergillus niger).